The sequence spans 523 residues: MTKEEIADKKRKVVDEEVIEKKKSKKHKKDKKDKKEKKDKKHKKHKKEKKGEKEVEVPEKESEKKPEPTSAVASEFYVQSEALTSLPQSDIDEYFKENEIAVEDSLDLALRPLLSFDYLSLDSSIQAEISKFPKPTPIQAVAWPYLLSGKDVVGVAETGSGKTFAFGVPAISHLMNDQKKRGIQVLVISPTRELASQIYDNLIVLTDKVGMQCCCVYGGVPKDEQRIQLKKSQVVVATPGRLLDLLQEGSVDLSQVNYLVLDEADRMLEKGFEEDIKNIIRETDASKRQTLMFTATWPKEVRELASTFMNNPIKVSIGNTDQLTANKRITQIVEVVDPRGKERKLLELLKKYHSGPKKNEKVLIFALYKKEAARVERNLKYNGYNVAAIHGDLSQQQRTQALNEFKSGKSNLLLATDVAARGLDIPNVKTVINLTFPLTVEDYVHRIGRTGRAGQTGTAHTLFTEQEKHLAGGLVNVLNGANQPVPEDLIKFGTHTKKKEHSAYGSFFKDVDLTKKPKKITFD.

Over residues 1–21 the composition is skewed to basic and acidic residues; sequence MTKEEIADKKRKVVDEEVIEK. The tract at residues 1-71 is disordered; sequence MTKEEIADKK…SEKKPEPTSA (71 aa). Over residues 22–48 the composition is skewed to basic residues; that stretch reads KKSKKHKKDKKDKKEKKDKKHKKHKKE. Residues 49–67 show a composition bias toward basic and acidic residues; that stretch reads KKGEKEVEVPEKESEKKPE. Positions 114–140 match the Q motif motif; the sequence is LSFDYLSLDSSIQAEISKFPKPTPIQA. In terms of domain architecture, Helicase ATP-binding spans 143–315; that stretch reads WPYLLSGKDV…STFMNNPIKV (173 aa). ATP is bound at residue 156–163; sequence AETGSGKT. The DEAD box signature appears at 262–265; sequence DEAD. A Helicase C-terminal domain is found at 344-493; the sequence is KLLELLKKYH…PVPEDLIKFG (150 aa).

The protein belongs to the DEAD box helicase family. DDX5/DBP2 subfamily.

The protein resides in the nucleus. It is found in the nucleolus. The enzyme catalyses ATP + H2O = ADP + phosphate + H(+). ATP-dependent RNA helicase required for 60S ribosomal subunit synthesis. Involved in efficient pre-rRNA processing, predominantly at site A3, which is necessary for the normal formation of 25S and 5.8S rRNAs. This chain is ATP-dependent RNA helicase DBP3 (DBP3), found in Saccharomyces cerevisiae (strain ATCC 204508 / S288c) (Baker's yeast).